The following is an 86-amino-acid chain: UPF0473 protein Clos_1662 (86 aa).

The protein belongs to the UPF0473 family.

The sequence is that of UPF0473 protein Clos_1662 from Alkaliphilus oremlandii (strain OhILAs) (Clostridium oremlandii (strain OhILAs)).